The sequence spans 331 residues: MTIIVTGAAGFIGSNLVKGLNERGETNVIAVDNLTRADKFHNLVDCEISDYLDKQDFLARFARGEFGKVRAVFHEGACSDTMETDGRYMMENNYRYTLSLMESCLEQGTQFLYASSAATYGASQVFREDREFERPLNVYGYSKFLFDQIVRRRLPSALSQIVGFRYFNVYGPRETHKGRMASVAFHNFNQFRADGTVKLFGEYGGYGPGMQSRDFISVEDVVKVNLFFFDHPEKSGIFNLGTGRAQPFNDIAATVVNTLREAEGKPPLSLDDLVQEGLVEYVKFPDALRGKYQCFTQSDVSKLRGAGYSERFLSVEEGVARYCRWLLERNG.

NADP(+) is bound by residues 11 to 12 (FI), 32 to 33 (DN), Lys39, Lys54, 75 to 79 (EGACS), and Asn92. Tyr139 (proton acceptor) is an active-site residue. Lys143 provides a ligand contact to NADP(+). Asn168 serves as a coordination point for substrate. NADP(+)-binding residues include Val169 and Lys177. Residue Lys177 is the Proton acceptor of the active site. Substrate contacts are provided by residues Arg179, His186, 200–203 (FGEY), Arg213, and Tyr292.

This sequence belongs to the NAD(P)-dependent epimerase/dehydratase family. HldD subfamily. Homopentamer. NADP(+) is required as a cofactor.

It catalyses the reaction ADP-D-glycero-beta-D-manno-heptose = ADP-L-glycero-beta-D-manno-heptose. It functions in the pathway nucleotide-sugar biosynthesis; ADP-L-glycero-beta-D-manno-heptose biosynthesis; ADP-L-glycero-beta-D-manno-heptose from D-glycero-beta-D-manno-heptose 7-phosphate: step 4/4. In terms of biological role, catalyzes the interconversion between ADP-D-glycero-beta-D-manno-heptose and ADP-L-glycero-beta-D-manno-heptose via an epimerization at carbon 6 of the heptose. This chain is ADP-L-glycero-D-manno-heptose-6-epimerase, found in Cupriavidus taiwanensis (strain DSM 17343 / BCRC 17206 / CCUG 44338 / CIP 107171 / LMG 19424 / R1) (Ralstonia taiwanensis (strain LMG 19424)).